We begin with the raw amino-acid sequence, 307 residues long: Coproporphyrin III ferrochelatase (307 aa).

Fe-coproporphyrin III contacts are provided by residues Tyr12, Arg29, 45–46, Ser53, and Tyr124; that span reads RY. Positions 181 and 263 each coordinate Fe(2+).

This sequence belongs to the ferrochelatase family.

The protein localises to the cytoplasm. It carries out the reaction Fe-coproporphyrin III + 2 H(+) = coproporphyrin III + Fe(2+). It participates in porphyrin-containing compound metabolism; protoheme biosynthesis. In terms of biological role, involved in coproporphyrin-dependent heme b biosynthesis. Catalyzes the insertion of ferrous iron into coproporphyrin III to form Fe-coproporphyrin III. The sequence is that of Coproporphyrin III ferrochelatase from Staphylococcus aureus (strain COL).